The chain runs to 119 residues: MVKMTRSKTFQAYLPSCHRTYSCIHCRAHLANHDELISKSFQGSQGRAYLFNSVVNVGCGPAEERVLLTGLHAVADIYCENCKTTLGWKYEHAFESSQKYKEGKYIIELAHMIKDNGWD.

One can recognise a Yippee domain in the interval 19–116; it reads RTYSCIHCRA…IELAHMIKDN (98 aa). 4 residues coordinate Zn(2+): Cys23, Cys26, Cys79, and Cys82.

The protein belongs to the yippee family. In terms of assembly, may interact with FAM168B.

Its subcellular location is the nucleus. It localises to the nucleolus. In Chlorocebus aethiops (Green monkey), this protein is Protein yippee-like 2 (YPEL2).